A 169-amino-acid polypeptide reads, in one-letter code: Peptide deformylase 1 (169 aa).

2 residues coordinate Fe cation: Cys-93 and His-135. Residue Glu-136 is part of the active site. Fe cation is bound at residue His-139.

Belongs to the polypeptide deformylase family. Requires Fe(2+) as cofactor.

The enzyme catalyses N-terminal N-formyl-L-methionyl-[peptide] + H2O = N-terminal L-methionyl-[peptide] + formate. Removes the formyl group from the N-terminal Met of newly synthesized proteins. Requires at least a dipeptide for an efficient rate of reaction. N-terminal L-methionine is a prerequisite for activity but the enzyme has broad specificity at other positions. The sequence is that of Peptide deformylase 1 from Corynebacterium glutamicum (strain ATCC 13032 / DSM 20300 / JCM 1318 / BCRC 11384 / CCUG 27702 / LMG 3730 / NBRC 12168 / NCIMB 10025 / NRRL B-2784 / 534).